A 591-amino-acid chain; its full sequence is Paxillin (591 aa).

Met1 is modified (N-acetylmethionine). Positions 3–15 match the LD motif 1 motif; sequence DLDALLADLESTT. The tract at residues 17 to 138 is disordered; sequence HISKRPVFLS…SSPTVMSTSL (122 aa). Tyr31 carries the post-translational modification Phosphotyrosine; by PTK6. Pro residues predominate over residues 45-54; it reads VPPPVPPPPS. A compositionally biased stretch (polar residues) spans 69-101; the sequence is WQPSGSRFIHQQPQSSSPVYGSSAKTSSVSNPQ. 2 positions are modified to phosphoserine: Ser83 and Ser85. Position 88 is a phosphotyrosine (Tyr88). The residue at position 106 (Ser106) is a Phosphoserine. Tyr118 carries the phosphotyrosine; by PTK6 modification. Phosphoserine is present on residues Ser119, Ser126, and Ser130. Residues 121 to 137 are compositionally biased toward polar residues; the sequence is PNKQKSAESSPTVMSTS. At Thr132 the chain carries Phosphothreonine. Residues Ser137, Ser140, and Ser143 each carry the phosphoserine modification. Positions 144 to 156 match the LD motif 2 motif; that stretch reads ELDRLLLELNAVQ. The segment at 156–213 is disordered; sequence QHNPPGFPADEANSGPPLPGALSPHYGVPETNSPLGGKAGPLTKEKPKRNGGRGLEDV. Tyr181 is subject to Phosphotyrosine. An LD motif 3 motif is present at residues 216-228; it reads SVESLLDELESSV. Ser230 is modified (phosphoserine). The interval 237-260 is disordered; sequence VNQGEMSSPQRVTSTQQQTRISAS. Position 244 is a phosphoserine; by CDK5 (Ser244). 4 positions are modified to phosphoserine: Ser250, Ser258, Ser261, and Ser272. Positions 265–276 match the LD motif 4 motif; it reads ELDELMASLSDF. Over residues 289-300 the composition is skewed to basic and acidic residues; that stretch reads RCWAADWPRDGG. The tract at residues 289–335 is disordered; the sequence is RCWAADWPRDGGRSSPGGQDEGGFMAQGKTGSSSPPGGPPKPGSQLD. 4 positions are modified to phosphoserine: Ser303, Ser322, Ser332, and Ser340. Residues 333-345 carry the LD motif 5 motif; sequence QLDSMLGSLQSDL. LIM zinc-binding domains follow at residues 356-415, 416-473, 474-533, and 534-591; these read GVCG…LFSP, RCYY…DMFA, PKCG…RRGS, and LCSG…KLFC. Phosphoserine is present on Ser533.

It belongs to the paxillin family. As to quaternary structure, binds to vinculin and to the SH3 domain of SRC. Interacts with GIT1, NUDT16L1/SDOS, PARVA, PARVB, SORBS1 and TGFB1I1. Component of cytoplasmic complexes, which also contain GIT1, ARHGEF6 and PAK1. Binds ASAP2. Interacts with RNF5 and PDCD10. Interacts with NEK3 and this interaction is prolactin-dependent. Interacts with PTK2/FAK1 and PTK2B/PYK2. Interacts with PTK6. Interacts with CD36. Interacts (via cytoplasmic domain) with CEACAM1; the interaction is phosphotyrosyl-dependent. Interacts with PXN; this complex stabilizes actin dynamics. Interacts with TRIM15. Interacts with PAK4; PAK4 acts as a scaffold to suppport PAXI phosphorylation at Ser-272. Phosphorylated by MAPK1/ERK2. Phosphorylated on tyrosine residues during integrin-mediated cell adhesion, embryonic development, fibroblast transformation and following stimulation of cells by mitogens. Phosphorylation at Ser-244 by CDK5 reduces its interaction with PTK2/FAK1 in matrix-cell focal adhesions (MCFA) during oligodendrocytes (OLs) differentiation. Phosphorylation at Tyr-31 and Tyr-118 by PTK6 promote the activation of RAC1 via CRK/CrKII, thereby promoting migration and invasion. Phosphorylation at Ser-250 by SLK is required for PXN redistribution and cell motility. Phosphorylation at Ser-272 promotes focal adhesion disassembly during cell migration.

It is found in the cytoplasm. The protein localises to the cytoskeleton. The protein resides in the cell junction. It localises to the focal adhesion. Its subcellular location is the cell cortex. Functionally, cytoskeletal protein involved in actin-membrane attachment at sites of cell adhesion to the extracellular matrix (focal adhesion). Recruits other proteins such as TRIM15 to focal adhesion. In Pongo abelii (Sumatran orangutan), this protein is Paxillin (PXN).